The chain runs to 425 residues: MAKQIQAIRGMNDILPTQSPLWQKVEAVLRSSVAAYGYSEIRTPIVENTDLFKRSIGEVTDIVEKEMYTFEDRNGDSLTLRPEGTASTVRAGNEHGLLYNQEQRLWYMGPMFRHERPQKGRYRQFHQFGVEIYGIGSADIDAEVLMLSARLWEKLGITEHVTLELNTLGDPAERAAYREALIAFLEQHKDKLDEDSQRRMYSNPLRVLDSKDPQVQSILADAPALMDYLGEESSQHFAQLRELLDAVGIQYRVNSRLVRGLDYYNRTVFEWVTNSLGSQGTVLAGGRYDGLVAQLGGKETPAVGFAMGLERIVLLLETLALTQDIPAEVDVYVAAMGDNCLVEAIKVAQELRSALPTLRVMSHCGGGNLKKQMKRADKSGAQVALLIGEEELAEGVVTVKYLRNDNEQQRVARNALSAFLAELTK.

Belongs to the class-II aminoacyl-tRNA synthetase family. Homodimer.

It is found in the cytoplasm. The enzyme catalyses tRNA(His) + L-histidine + ATP = L-histidyl-tRNA(His) + AMP + diphosphate + H(+). The protein is Histidine--tRNA ligase of Shewanella oneidensis (strain ATCC 700550 / JCM 31522 / CIP 106686 / LMG 19005 / NCIMB 14063 / MR-1).